We begin with the raw amino-acid sequence, 52 residues long: DNA-directed RNA polymerase subunit Rpo12 (52 aa).

Cys13, Cys30, and Cys33 together coordinate Zn(2+).

It belongs to the archaeal Rpo12/eukaryotic RPC10 RNA polymerase subunit family. In terms of assembly, part of the RNA polymerase complex. It depends on Zn(2+) as a cofactor.

Its subcellular location is the cytoplasm. It carries out the reaction RNA(n) + a ribonucleoside 5'-triphosphate = RNA(n+1) + diphosphate. Its function is as follows. DNA-dependent RNA polymerase (RNAP) catalyzes the transcription of DNA into RNA using the four ribonucleoside triphosphates as substrates. The chain is DNA-directed RNA polymerase subunit Rpo12 from Pyrobaculum neutrophilum (strain DSM 2338 / JCM 9278 / NBRC 100436 / V24Sta) (Thermoproteus neutrophilus).